A 117-amino-acid polypeptide reads, in one-letter code: Prefoldin subunit beta (117 aa).

This sequence belongs to the prefoldin subunit beta family. As to quaternary structure, heterohexamer of two alpha and four beta subunits.

Its subcellular location is the cytoplasm. Its function is as follows. Molecular chaperone capable of stabilizing a range of proteins. Seems to fulfill an ATP-independent, HSP70-like function in archaeal de novo protein folding. This chain is Prefoldin subunit beta, found in Methanococcoides burtonii (strain DSM 6242 / NBRC 107633 / OCM 468 / ACE-M).